The following is a 405-amino-acid chain: Formin-like protein 15a (405 aa).

The tract at residues M1–P31 is disordered. Residues G18–P31 are compositionally biased toward pro residues. Positions F52 to I405 constitute an FH2 domain.

The protein belongs to the formin-like family. Class-II subfamily.

In Arabidopsis thaliana (Mouse-ear cress), this protein is Formin-like protein 15a (FH15A).